A 449-amino-acid polypeptide reads, in one-letter code: UDP-N-acetylmuramoylalanine--D-glutamate ligase (449 aa).

ATP is bound at residue 118-124; that stretch reads GTNGKTT.

The protein belongs to the MurCDEF family.

Its subcellular location is the cytoplasm. The catalysed reaction is UDP-N-acetyl-alpha-D-muramoyl-L-alanine + D-glutamate + ATP = UDP-N-acetyl-alpha-D-muramoyl-L-alanyl-D-glutamate + ADP + phosphate + H(+). Its pathway is cell wall biogenesis; peptidoglycan biosynthesis. Its function is as follows. Cell wall formation. Catalyzes the addition of glutamate to the nucleotide precursor UDP-N-acetylmuramoyl-L-alanine (UMA). This Staphylococcus carnosus (strain TM300) protein is UDP-N-acetylmuramoylalanine--D-glutamate ligase.